Reading from the N-terminus, the 429-residue chain is MAGSGAWKRLKSMLRKDDAPLFLNDTSAFDFSDEAGDEGLSRFNKLRVVVADDGSEAPERPVNGAHPTLQADDDSLLDQDLPLTNSQLSLKVDSCDNCSKQREILKQRKVKARLTIAAVLYLLFMIGELVGGYIANSLAIMTDALHMLTDLSAIILTLLALWLSSKSPTKRFTFGFHRLEVLSAMISVLLVYILMGFLLYEAVQRTIHMNYEINGDIMLITAAVGVAVNVIMGFLLNQSGHRHSHSHSLPSNSPTRGSGCERNHGQDSLAVRAAFVHALGDLVQSVGVLIAAYIIRFKPEYKIADPICTYVFSLLVAFTTFRIIWDTVVIILEGVPSHLNVDYIKEALMKIEDVYSVEDLNIWSLTSGKSTAIVHIQLIPGSSSKWEEVQSKANHLLLNTFGMYRCTIQLQSYRQEVDRTCANCQSSSP.

The Cytoplasmic segment spans residues methionine 1–arginine 113. The chain crosses the membrane as a helical span at residues leucine 114–isoleucine 134. Residues alanine 135–aspartate 143 lie on the Lumenal side of the membrane. The chain crosses the membrane as a helical span at residues alanine 144–serine 164. Zn(2+) contacts are provided by histidine 146 and aspartate 150. The Cytoplasmic segment spans residues serine 165 to arginine 178. The chain crosses the membrane as a helical span at residues leucine 179–leucine 199. Residues tyrosine 200–aspartate 216 are Lumenal-facing. A helical membrane pass occupies residues isoleucine 217 to asparagine 237. Residues glutamine 238–alanine 274 are Cytoplasmic-facing. The tract at residues glycine 240–histidine 264 is zinc binding. The helical transmembrane segment at phenylalanine 275–isoleucine 295 threads the bilayer. Positions 277 and 281 each coordinate Zn(2+). At arginine 296–tyrosine 310 the chain is on the lumenal side. The chain crosses the membrane as a helical span at residues valine 311–isoleucine 331. Topologically, residues leucine 332 to proline 429 are cytoplasmic.

This sequence belongs to the cation diffusion facilitator (CDF) transporter (TC 2.A.4) family. SLC30A subfamily. Homodimer; dityrosine-linked. Homodimerization could be specific of the human protein and enhances the zinc transport efficiency. Interacts with TMEM163. In terms of processing, homodimerization through dityrosine bonds is stimulated by oxidative stress.

Its subcellular location is the endosome membrane. The protein resides in the late endosome membrane. It is found in the lysosome membrane. It carries out the reaction Zn(2+)(in) + 2 H(+)(out) = Zn(2+)(out) + 2 H(+)(in). In terms of biological role, probable proton-coupled zinc ion antiporter mediating zinc import from cytoplasm potentially into the endocytic compartment. Controls zinc deposition in milk. This chain is Probable proton-coupled zinc antiporter SLC30A4, found in Homo sapiens (Human).